The chain runs to 210 residues: Na(+)-translocating NADH-quinone reductase subunit D (210 aa).

Transmembrane regions (helical) follow at residues 14–34, 42–62, 72–92, 103–123, 131–151, and 178–198; these read PIISNNPIALQILGVCSALAV, LVMTIALTAVTALSNLFISMI, IIVQMTIIASLVIVVDQVLQA, VFVGLIITNCIVMGRAEAYAM, FMDGIGNGLGYGAILLSVGFV, and NGLLLLPPSAFFLIASLIWII.

This sequence belongs to the NqrDE/RnfAE family. As to quaternary structure, composed of six subunits; NqrA, NqrB, NqrC, NqrD, NqrE and NqrF.

It is found in the cell inner membrane. The catalysed reaction is a ubiquinone + n Na(+)(in) + NADH + H(+) = a ubiquinol + n Na(+)(out) + NAD(+). NQR complex catalyzes the reduction of ubiquinone-1 to ubiquinol by two successive reactions, coupled with the transport of Na(+) ions from the cytoplasm to the periplasm. NqrA to NqrE are probably involved in the second step, the conversion of ubisemiquinone to ubiquinol. This chain is Na(+)-translocating NADH-quinone reductase subunit D, found in Shewanella loihica (strain ATCC BAA-1088 / PV-4).